A 66-amino-acid polypeptide reads, in one-letter code: MKAAEIRNYSDEELKKLLLEKKKQLMDMRFQHAMGQLRNTAQIKEVRRDIARIRTILRERELGIRR.

The protein belongs to the universal ribosomal protein uL29 family.

The polypeptide is Large ribosomal subunit protein uL29 (Pseudothermotoga lettingae (strain ATCC BAA-301 / DSM 14385 / NBRC 107922 / TMO) (Thermotoga lettingae)).